An 85-amino-acid polypeptide reads, in one-letter code: Large ribosomal subunit protein bL27 (85 aa).

A disordered region spans residues 1 to 20 (MATKKAGGSTRNGRDSEAKR).

The protein belongs to the bacterial ribosomal protein bL27 family.

In Actinobacillus pleuropneumoniae serotype 5b (strain L20), this protein is Large ribosomal subunit protein bL27.